A 187-amino-acid polypeptide reads, in one-letter code: Threonylcarbamoyl-AMP synthase (187 aa).

The region spanning 3 to 187 is the YrdC-like domain; the sequence is QVLPADAAEL…ARSGTVIREG (185 aa).

It belongs to the SUA5 family. TsaC subfamily.

The protein resides in the cytoplasm. It catalyses the reaction L-threonine + hydrogencarbonate + ATP = L-threonylcarbamoyladenylate + diphosphate + H2O. Required for the formation of a threonylcarbamoyl group on adenosine at position 37 (t(6)A37) in tRNAs that read codons beginning with adenine. Catalyzes the conversion of L-threonine, HCO(3)(-)/CO(2) and ATP to give threonylcarbamoyl-AMP (TC-AMP) as the acyladenylate intermediate, with the release of diphosphate. In Shewanella pealeana (strain ATCC 700345 / ANG-SQ1), this protein is Threonylcarbamoyl-AMP synthase.